Consider the following 572-residue polypeptide: Probable catabolite repression protein creC (572 aa).

The segment at 36–61 is disordered; sequence HLATPPPHPSEAPVVNPNPLATVPTP. 4 WD repeats span residues 226-266, 306-347, 348-387, and 390-434; these read VSNS…ALFT, LANQ…DIFR, SYYGGLICVCWSPDGKYIVTGGQDDLVTIWSFPERKIVAR, and GHNS…LHRP. Disordered stretches follow at residues 458–486 and 541–572; these read HRADSASNRMRSDSQRTADTYNDYDSAVR and NDSYNGNTSSPAISTSAAGSGSGIADSAMGSL. A WD 5 repeat occupies 506-543; it reads VGDDPICWLGFQEDSIMTSSLEGHIRTWDRPREGINDS. Residues 549-572 are compositionally biased toward low complexity; it reads SSPAISTSAAGSGSGIADSAMGSL.

Belongs to the WD repeat creC family. In terms of assembly, interacts with creB.

Its function is as follows. Component of the regulatory network controlling carbon source utilization through ubiquitination and deubiquitination involving creA, creB, creC, creD and acrB. Required to prevent the proteolysis of the CreB deubiquitinating enzyme in the absence of carbon catabolite repression. CreB deubiquitinating enzyme stabilized in a complex with the CreC leads to the expression of genes such as those in the proline and quinate pathways. In Aspergillus flavus (strain ATCC 200026 / FGSC A1120 / IAM 13836 / NRRL 3357 / JCM 12722 / SRRC 167), this protein is Probable catabolite repression protein creC (creC).